The chain runs to 375 residues: Holliday junction branch migration complex subunit RuvB (375 aa).

The segment at 1 to 50 is disordered; the sequence is MAIVSSKSPDPAERRSQAKTKPSVSEPQDSLVRPQAAPEESQRPEDQIRP. Residues 13 to 209 are large ATPase domain (RuvB-L); the sequence is ERRSQAKTKP…FGLVQRLRFY (197 aa). Positions 19 to 28 are enriched in polar residues; it reads KTKPSVSEPQ. Positions 40–49 are enriched in basic and acidic residues; it reads ESQRPEDQIR. ATP-binding positions include isoleucine 48, arginine 49, glycine 90, lysine 93, threonine 94, threonine 95, 156–158, arginine 199, tyrosine 209, and arginine 246; that span reads EDF. Threonine 94 lines the Mg(2+) pocket. The segment at 210-280 is small ATPAse domain (RuvB-S); sequence EVEALTDIVQ…IAATALELYN (71 aa). The tract at residues 283 to 375 is head domain (RuvB-H); the sequence is PCGLDWTDRR…LQQLLTEPET (93 aa). Residues arginine 338 and arginine 343 each contribute to the DNA site.

Belongs to the RuvB family. Homohexamer. Forms an RuvA(8)-RuvB(12)-Holliday junction (HJ) complex. HJ DNA is sandwiched between 2 RuvA tetramers; dsDNA enters through RuvA and exits via RuvB. An RuvB hexamer assembles on each DNA strand where it exits the tetramer. Each RuvB hexamer is contacted by two RuvA subunits (via domain III) on 2 adjacent RuvB subunits; this complex drives branch migration. In the full resolvosome a probable DNA-RuvA(4)-RuvB(12)-RuvC(2) complex forms which resolves the HJ.

It is found in the cytoplasm. The catalysed reaction is ATP + H2O = ADP + phosphate + H(+). The RuvA-RuvB-RuvC complex processes Holliday junction (HJ) DNA during genetic recombination and DNA repair, while the RuvA-RuvB complex plays an important role in the rescue of blocked DNA replication forks via replication fork reversal (RFR). RuvA specifically binds to HJ cruciform DNA, conferring on it an open structure. The RuvB hexamer acts as an ATP-dependent pump, pulling dsDNA into and through the RuvAB complex. RuvB forms 2 homohexamers on either side of HJ DNA bound by 1 or 2 RuvA tetramers; 4 subunits per hexamer contact DNA at a time. Coordinated motions by a converter formed by DNA-disengaged RuvB subunits stimulates ATP hydrolysis and nucleotide exchange. Immobilization of the converter enables RuvB to convert the ATP-contained energy into a lever motion, pulling 2 nucleotides of DNA out of the RuvA tetramer per ATP hydrolyzed, thus driving DNA branch migration. The RuvB motors rotate together with the DNA substrate, which together with the progressing nucleotide cycle form the mechanistic basis for DNA recombination by continuous HJ branch migration. Branch migration allows RuvC to scan DNA until it finds its consensus sequence, where it cleaves and resolves cruciform DNA. This chain is Holliday junction branch migration complex subunit RuvB, found in Synechococcus elongatus (strain ATCC 33912 / PCC 7942 / FACHB-805) (Anacystis nidulans R2).